Here is a 192-residue protein sequence, read N- to C-terminus: Adenylate kinase (192 aa).

11 to 16 (GSGKGT) serves as a coordination point for ATP. The tract at residues 31 to 60 (STGDIFRANVKGETPLGIEAKKYMDNGDFV) is NMP. AMP is bound by residues threonine 32, arginine 37, 58-60 (DFV), 86-89 (GYPR), and glutamine 93. Residues 127-137 (GRAKETGRSDD) are LID. Residue arginine 128 coordinates ATP. AMP-binding residues include arginine 134 and arginine 145. Glycine 173 is a binding site for ATP.

The protein belongs to the adenylate kinase family. Monomer.

It localises to the cytoplasm. The enzyme catalyses AMP + ATP = 2 ADP. The protein operates within purine metabolism; AMP biosynthesis via salvage pathway; AMP from ADP: step 1/1. Its function is as follows. Catalyzes the reversible transfer of the terminal phosphate group between ATP and AMP. Plays an important role in cellular energy homeostasis and in adenine nucleotide metabolism. This is Adenylate kinase from Pseudarthrobacter chlorophenolicus (strain ATCC 700700 / DSM 12829 / CIP 107037 / JCM 12360 / KCTC 9906 / NCIMB 13794 / A6) (Arthrobacter chlorophenolicus).